The following is a 209-amino-acid chain: Protein GrpE (209 aa).

The protein belongs to the GrpE family. Homodimer.

Its subcellular location is the cytoplasm. Participates actively in the response to hyperosmotic and heat shock by preventing the aggregation of stress-denatured proteins, in association with DnaK and GrpE. It is the nucleotide exchange factor for DnaK and may function as a thermosensor. Unfolded proteins bind initially to DnaJ; upon interaction with the DnaJ-bound protein, DnaK hydrolyzes its bound ATP, resulting in the formation of a stable complex. GrpE releases ADP from DnaK; ATP binding to DnaK triggers the release of the substrate protein, thus completing the reaction cycle. Several rounds of ATP-dependent interactions between DnaJ, DnaK and GrpE are required for fully efficient folding. This is Protein GrpE from Colwellia psychrerythraea (strain 34H / ATCC BAA-681) (Vibrio psychroerythus).